Reading from the N-terminus, the 189-residue chain is Interferon alpha-4 (189 aa).

The signal sequence occupies residues 1 to 23; sequence MALSFSLLMAVLVLSYKSICSLG. Cystine bridges form between C24–C122 and C52–C162.

It belongs to the alpha/beta interferon family.

It is found in the secreted. Produced by macrophages, IFN-alpha have antiviral activities. Interferon stimulates the production of two enzymes: a protein kinase and an oligoadenylate synthetase. The protein is Interferon alpha-4 (IFNA4) of Homo sapiens (Human).